Reading from the N-terminus, the 450-residue chain is tRNA modification GTPase MnmE (450 aa).

(6S)-5-formyl-5,6,7,8-tetrahydrofolate contacts are provided by lysine 21, glutamate 78, and lysine 117. One can recognise a TrmE-type G domain in the interval 213–376 (GHALSIIGKP…LSQKISAFFP (164 aa)). Asparagine 223 lines the K(+) pocket. Residues 223–228 (NAGKSS), 242–248 (SDIKGTT), and 267–270 (DTAG) each bind GTP. Serine 227 is a Mg(2+) binding site. Serine 242, isoleucine 244, and threonine 247 together coordinate K(+). Residue threonine 248 participates in Mg(2+) binding. Position 450 (lysine 450) interacts with (6S)-5-formyl-5,6,7,8-tetrahydrofolate.

This sequence belongs to the TRAFAC class TrmE-Era-EngA-EngB-Septin-like GTPase superfamily. TrmE GTPase family. Homodimer. Heterotetramer of two MnmE and two MnmG subunits. K(+) is required as a cofactor.

Its subcellular location is the cytoplasm. Functionally, exhibits a very high intrinsic GTPase hydrolysis rate. Involved in the addition of a carboxymethylaminomethyl (cmnm) group at the wobble position (U34) of certain tRNAs, forming tRNA-cmnm(5)s(2)U34. The polypeptide is tRNA modification GTPase MnmE (Helicobacter acinonychis (strain Sheeba)).